The primary structure comprises 654 residues: Fatty acid photodecarboxylase, chloroplastic (654 aa).

Residues M1–A62 constitute a chloroplast transit peptide. FAD contacts are provided by residues T93–A94, E114, L162, S166, N170–L173, and V298. Positions 432, 451, 466, and 486 each coordinate hexadecanoate. Residue G622 coordinates FAD.

The protein belongs to the GMC oxidoreductase family. It depends on FAD as a cofactor.

The protein resides in the plastid. It is found in the chloroplast. The catalysed reaction is a long-chain fatty acid + hnu + H(+) = a long-chain alkane + CO2. The enzyme catalyses hnu + hexadecanoate + H(+) = pentadecane + CO2. It catalyses the reaction hnu + octadecanoate + H(+) = heptadecane + CO2. It carries out the reaction heptadecanoate + hnu + H(+) = hexadecane + CO2. The catalysed reaction is hnu + tetradecanoate + H(+) = tridecane + CO2. The enzyme catalyses octanoate + hnu + H(+) = heptane + CO2. Activated by blue light and repressed by red light. Catalyzes the decarboxylation of free fatty acids to n-alkanes or n-alkenes in response to blue light. Substrate preference is toward fatty acids with C16 or C17 chains. Converts n-octanoic acid (C8 chain) more efficiently than palmitate (n-hexadecanoic acid, C16 chain) into n-heptane (C7 chain) and n-pentadecane (C15 chain), respectively, partly due to an autocatalytic effect of its n-heptane product. Saturated fatty acids are converted to alkanes, not alkenes. The decarboxylation is initiated through electron abstraction from the fatty acid by the photo-excited FAD. The protein is Fatty acid photodecarboxylase, chloroplastic of Chlorella variabilis (Green alga).